We begin with the raw amino-acid sequence, 292 residues long: Claudin-23 (292 aa).

Topologically, residues Met-1–Thr-3 are cytoplasmic. A helical membrane pass occupies residues Pro-4–Gly-24. Residues Thr-25–Arg-81 are Extracellular-facing. A helical transmembrane segment spans residues Ala-82–Val-102. The Cytoplasmic portion of the chain corresponds to Arg-103 to Asn-110. Residues Phe-111–Pro-131 traverse the membrane as a helical segment. The Extracellular portion of the chain corresponds to Val-132–Leu-160. Residues Val-161 to Phe-181 form a helical membrane-spanning segment. Residues Ala-182 to Leu-292 lie on the Cytoplasmic side of the membrane. Residues Lys-222 to Leu-292 form a disordered region. A compositionally biased stretch (polar residues) spans Asp-273–Cys-282.

Belongs to the claudin family. In terms of tissue distribution, expressed in germinal center B-cells, placenta, stomach as well as in colon tumor.

The protein localises to the cell junction. It is found in the tight junction. Its subcellular location is the cell membrane. Plays a major role in tight junction-specific obliteration of the intercellular space, through calcium-independent cell-adhesion activity. In Homo sapiens (Human), this protein is Claudin-23 (CLDN23).